The chain runs to 404 residues: Serine/threonine transporter SstT (404 aa).

Helical transmembrane passes span 17-37, 39-59, 75-95, 138-158, 179-199, 212-232, 287-307, and 313-333; these read IGIG…LTGF, ILGK…VFAL, MTLI…VAVL, ALAT…GLAL, IVVW…FTTI, FLIL…NPLI, IPLG…VLTL, and FGIP…AVSA.

The protein belongs to the dicarboxylate/amino acid:cation symporter (DAACS) (TC 2.A.23) family.

It localises to the cell membrane. The enzyme catalyses L-serine(in) + Na(+)(in) = L-serine(out) + Na(+)(out). It carries out the reaction L-threonine(in) + Na(+)(in) = L-threonine(out) + Na(+)(out). Its function is as follows. Involved in the import of serine and threonine into the cell, with the concomitant import of sodium (symport system). The sequence is that of Serine/threonine transporter SstT from Streptococcus pyogenes serotype M1.